A 393-amino-acid polypeptide reads, in one-letter code: Elongation factor Tu (393 aa).

Positions 10–203 (KPHVNIGTIG…AVDAFIPDPV (194 aa)) constitute a tr-type G domain. The tract at residues 19-26 (GHVDHGKT) is G1. A GTP-binding site is contributed by 19-26 (GHVDHGKT). Thr-26 is a Mg(2+) binding site. The tract at residues 60–64 (GITIS) is G2. Positions 81 to 84 (DCPG) are G3. Residues 81–85 (DCPGH) and 136–139 (NKVD) contribute to the GTP site. A G4 region spans residues 136–139 (NKVD). Residues 173-175 (SAL) are G5.

It belongs to the TRAFAC class translation factor GTPase superfamily. Classic translation factor GTPase family. EF-Tu/EF-1A subfamily. As to quaternary structure, monomer.

The protein localises to the cytoplasm. It catalyses the reaction GTP + H2O = GDP + phosphate + H(+). GTP hydrolase that promotes the GTP-dependent binding of aminoacyl-tRNA to the A-site of ribosomes during protein biosynthesis. The polypeptide is Elongation factor Tu (Chlorobium chlorochromatii (strain CaD3)).